We begin with the raw amino-acid sequence, 290 residues long: 33 kDa chaperonin (290 aa).

Cystine bridges form between Cys234–Cys236 and Cys267–Cys270.

It belongs to the HSP33 family. Post-translationally, under oxidizing conditions two disulfide bonds are formed involving the reactive cysteines. Under reducing conditions zinc is bound to the reactive cysteines and the protein is inactive.

The protein localises to the cytoplasm. Its function is as follows. Redox regulated molecular chaperone. Protects both thermally unfolding and oxidatively damaged proteins from irreversible aggregation. Plays an important role in the bacterial defense system toward oxidative stress. This Colwellia psychrerythraea (strain 34H / ATCC BAA-681) (Vibrio psychroerythus) protein is 33 kDa chaperonin.